Here is a 619-residue protein sequence, read N- to C-terminus: Chaperone protein DnaK (619 aa).

At T175 the chain carries Phosphothreonine; by autocatalysis. Residues 578 to 619 are disordered; sequence NGGAQGEGFDPNNMGGANAGTGAANSNDDNVVDADFEVQDDK. The segment covering 589-606 has biased composition (low complexity); the sequence is NNMGGANAGTGAANSNDD. A compositionally biased stretch (acidic residues) spans 607–619; that stretch reads NVVDADFEVQDDK.

It belongs to the heat shock protein 70 family.

In terms of biological role, acts as a chaperone. In Clostridium perfringens (strain SM101 / Type A), this protein is Chaperone protein DnaK.